Consider the following 466-residue polypeptide: Soluble pyridine nucleotide transhydrogenase (466 aa).

Residue 36–45 participates in FAD binding; that stretch reads ERYHNVGGGC.

This sequence belongs to the class-I pyridine nucleotide-disulfide oxidoreductase family. The cofactor is FAD.

Its subcellular location is the cytoplasm. The enzyme catalyses NAD(+) + NADPH = NADH + NADP(+). In terms of biological role, conversion of NADPH, generated by peripheral catabolic pathways, to NADH, which can enter the respiratory chain for energy generation. This Salmonella paratyphi A (strain ATCC 9150 / SARB42) protein is Soluble pyridine nucleotide transhydrogenase.